The primary structure comprises 163 residues: Nucleotide-binding protein YajQ (163 aa).

This sequence belongs to the YajQ family.

Nucleotide-binding protein. The chain is Nucleotide-binding protein YajQ from Escherichia coli O127:H6 (strain E2348/69 / EPEC).